A 157-amino-acid polypeptide reads, in one-letter code: Thioredoxin 2 (157 aa).

The signal sequence occupies residues 1–22 (MKHILALVVFIISFFCFKDVNC). In terms of domain architecture, Thioredoxin spans 46 to 157 (LRMYNKMPRL…ELTSTIRKHL (112 aa)). Active-site nucleophile residues include cysteine 82 and cysteine 85. A disulfide bridge links cysteine 82 with cysteine 85.

It belongs to the thioredoxin family. Monomer. Component of the translocon PTEX complex composed of HSP101, EXP2, PTEX150, PTEX88 and TRX2. In terms of processing, the disulfide bond between Cys-82 and Cys-85 acts as a redox-active center and is reduced by thioredoxin reductase TRXR.

Its function is as follows. Participates in various redox reactions through the reversible oxidation of its active center dithiol to a disulfide and catalyzes dithiol-disulfide exchange reactions. As part of the translocon PTEX complex, plays a role in the export of parasite proteins into the host erythrocyte. The translocon PTEX complex is a multi-protein machinery resident in the parasite parasitophorous vacuolar membrane, responsible for protein secretion into host cells. May contribute to the unfolding of proteins containing the PEXEL localization motif before their passage through the translocon or regulate the PTEX complex function. The polypeptide is Thioredoxin 2 (Plasmodium berghei (strain Anka)).